Consider the following 300-residue polypeptide: GTPase Era (300 aa).

The region spanning 5–172 (HSGFVAIIGR…LTALTDALPV (168 aa)) is the Era-type G domain. Positions 13–20 (GRPNVGKS) are G1. A GTP-binding site is contributed by 13–20 (GRPNVGKS). The tract at residues 39–43 (QTTRN) is G2. A G3 region spans residues 60 to 63 (DTPG). Residues 60-64 (DTPGI) and 122-125 (NKID) each bind GTP. The interval 122–125 (NKID) is G4. The segment at 151-153 (ISA) is G5. A KH type-2 domain is found at 203 to 280 (TRDEVPHAVA…NLKLWVRVQK (78 aa)).

The protein belongs to the TRAFAC class TrmE-Era-EngA-EngB-Septin-like GTPase superfamily. Era GTPase family. Monomer.

It localises to the cytoplasm. The protein localises to the cell membrane. An essential GTPase that binds both GDP and GTP, with rapid nucleotide exchange. Plays a role in 16S rRNA processing and 30S ribosomal subunit biogenesis and possibly also in cell cycle regulation and energy metabolism. The chain is GTPase Era from Lacticaseibacillus paracasei (strain ATCC 334 / BCRC 17002 / CCUG 31169 / CIP 107868 / KCTC 3260 / NRRL B-441) (Lactobacillus paracasei).